The following is a 697-amino-acid chain: SITS-binding protein (697 aa).

The disordered stretch occupies residues 1–20; sequence MARRAKKMASNSGDSSPEPG. Topologically, residues 2-29 are cytoplasmic; sequence ARRAKKMASNSGDSSPEPGIKEINETWK. A helical membrane pass occupies residues 30-50; that stretch reads GAIACLGVALLFLMTIGVLYW. Residues Asn112, Asn134, Asn162, Asn386, Asn405, and Asn470 are each glycosylated (N-linked (GlcNAc...) asparagine). Helical transmembrane passes span 503-521 and 542-562; these read GLIP…FFIP and WMQI…WVFG. A glycan (N-linked (GlcNAc...) asparagine) is linked at Asn568.

It belongs to the glycosyl hydrolase 31 family. In terms of assembly, homodimer; disulfide-linked. As to expression, electroplax tissue, brain (200-fold less), and heart (500-fold less).

The protein localises to the membrane. Functionally, this glycoprotein is probably not a functional part of the chloride channel. The chain is SITS-binding protein from Tetronarce californica (Pacific electric ray).